Reading from the N-terminus, the 478-residue chain is Calcium/calmodulin-dependent protein kinase type II subunit alpha (478 aa).

A Phosphotyrosine modification is found at Y13. The Protein kinase domain maps to 13–271; sequence YQLFEELGKG…AAEALKHPWI (259 aa). ATP is bound by residues 19 to 27 and K42; that span reads LGKGAFSVV. The Proton acceptor role is filled by D135. The residue at position 257 (S257) is a Phosphoserine. T286 is modified (phosphothreonine; by autocatalysis). Positions 290–300 are calmodulin-binding; it reads LKKFNARRKLK. Residues 310 to 320 are interaction with BAALC; that stretch reads TRNFSGGKSGG. Positions 314–341 are disordered; sequence SGGKSGGNKKSDGVKESSESTNTTIEDE. The span at 322–331 shows a compositional bias: basic and acidic residues; it reads KKSDGVKESS. Residues S330, S331, and S333 each carry the phosphoserine modification. 2 positions are modified to phosphothreonine: T336 and T337. S404 is modified (phosphoserine).

This sequence belongs to the protein kinase superfamily. CAMK Ser/Thr protein kinase family. CaMK subfamily. In terms of assembly, there are 4 genes encoding calcium/calmodulin-dependent protein kinase type II chains: CAMK2A, CAMK2B, CAMK2G and CAMK2D. The corresponding proteins assemble into homo- or heteromultimeric holoenzymes composed of 12 subunits with two hexameric rings stacked one on top of the other. Interacts with BAALC. Interacts with MPDZ. Interacts with SYN1. Interacts with CAMK2N2. Interacts with SYNGAP1. Interacts with SYNPO2. Interacts with SHANK3. Interacts with GRIN2B. Interacts with CACNB2. Interacts with LRRC7. Interacts with GRM5. Interacts with DAGLA (via C-terminal); this interaction is enhanced by autophosphorylation of CAMK2A at Thr-286. Interacts with CAMK2N1; this interaction requires CAMK2A activation by Ca(2+). Requires Mg(2+) as cofactor. Post-translationally, autophosphorylation of Thr-286 following activation by Ca(2+)/calmodulin. Phosphorylation of Thr-286 locks the kinase into an activated state. Palmitoylated. Probably palmitoylated by ZDHHC3 and ZDHHC7.

The protein localises to the synapse. The protein resides in the postsynaptic density. It localises to the cell projection. Its subcellular location is the dendritic spine. It is found in the dendrite. It carries out the reaction L-seryl-[protein] + ATP = O-phospho-L-seryl-[protein] + ADP + H(+). The catalysed reaction is L-threonyl-[protein] + ATP = O-phospho-L-threonyl-[protein] + ADP + H(+). Activated by Ca(2+)/calmodulin. Binding of calmodulin results in conformational change that relieves intrasteric autoinhibition and allows autophosphorylation of Thr-286 which turns the kinase in a constitutively active form and confers to the kinase a Ca(2+)-independent activity. Calcium/calmodulin-dependent protein kinase that functions autonomously after Ca(2+)/calmodulin-binding and autophosphorylation, and is involved in various processes, such as synaptic plasticity, neurotransmitter release and long-term potentiation. Member of the NMDAR signaling complex in excitatory synapses, it regulates NMDAR-dependent potentiation of the AMPAR and therefore excitatory synaptic transmission. Regulates dendritic spine development. Also regulates the migration of developing neurons. Phosphorylates the transcription factor FOXO3 to activate its transcriptional activity. Phosphorylates the transcription factor ETS1 in response to calcium signaling, thereby decreasing ETS1 affinity for DNA. In response to interferon-gamma (IFN-gamma) stimulation, catalyzes phosphorylation of STAT1, stimulating the JAK-STAT signaling pathway. In response to interferon-beta (IFN-beta) stimulation, stimulates the JAK-STAT signaling pathway. Acts as a negative regulator of 2-arachidonoylglycerol (2-AG)-mediated synaptic signaling via modulation of DAGLA activity. In Pongo abelii (Sumatran orangutan), this protein is Calcium/calmodulin-dependent protein kinase type II subunit alpha (CAMK2A).